The primary structure comprises 140 residues: Relaxin-3 (140 aa).

The first 23 residues, 1–23, serve as a signal peptide directing secretion; that stretch reads MATRGLLLASWALLGALVLQAEA. Disulfide bonds link C33-C127, C45-C140, and C126-C131. Residues 53–116 constitute a propeptide, connecting peptide; it reads ADILAHDPLG…GSPGVVRGSR (64 aa).

Belongs to the insulin family. In terms of assembly, heterodimer of a B chain and an A chain linked by two disulfide bonds. Highly abundant expression is detected in neurons within the ventomedial dorsal tegmental nucleus and the laterally central gray alpha of the pons. Also detected at much lower levels within the hippocampus.

Its subcellular location is the secreted. May play a role in neuropeptide signaling processes. Ligand for LGR7, relaxin-3 receptor-1 and relaxin-3 receptor-2. The protein is Relaxin-3 (Rln3) of Rattus norvegicus (Rat).